A 180-amino-acid polypeptide reads, in one-letter code: Putative adenylate kinase (180 aa).

ATP-binding residues include Gly-10, Gly-12, Lys-13, Thr-14, and Thr-15. The segment at 30–50 (NLRDFALEKGCGREVDGEVEV) is NMP. Residues 99-109 (ERGYSKEKIGE) are LID. ATP contacts are provided by Arg-100 and Lys-138.

It belongs to the adenylate kinase family. AK6 subfamily. In terms of assembly, interacts with uS11. Not a structural component of 40S pre-ribosomes, but transiently interacts with them by binding to uS11.

The catalysed reaction is AMP + ATP = 2 ADP. It carries out the reaction ATP + H2O = ADP + phosphate + H(+). In terms of biological role, broad-specificity nucleoside monophosphate (NMP) kinase that catalyzes the reversible transfer of the terminal phosphate group between nucleoside triphosphates and monophosphates. Also has ATPase activity. Involved in the late maturation steps of the 30S ribosomal particles, specifically 16S rRNA maturation. While NMP activity is not required for ribosome maturation, ATPase activity is. Associates transiently with small ribosomal subunit protein uS11. ATP hydrolysis breaks the interaction with uS11. May temporarily remove uS11 from the ribosome to enable a conformational change of the ribosomal RNA that is needed for the final maturation step of the small ribosomal subunit. The protein is Putative adenylate kinase of Pyrococcus abyssi (strain GE5 / Orsay).